Consider the following 363-residue polypeptide: tRNA(Met) cytidine acetate ligase (363 aa).

ATP contacts are provided by residues 7–20 (IAEFNPFHNGHKYL), G96, N152, and R175.

Belongs to the TmcAL family.

It is found in the cytoplasm. It carries out the reaction cytidine(34) in elongator tRNA(Met) + acetate + ATP = N(4)-acetylcytidine(34) in elongator tRNA(Met) + AMP + diphosphate. Catalyzes the formation of N(4)-acetylcytidine (ac(4)C) at the wobble position of elongator tRNA(Met), using acetate and ATP as substrates. First activates an acetate ion to form acetyladenylate (Ac-AMP) and then transfers the acetyl group to tRNA to form ac(4)C34. The polypeptide is tRNA(Met) cytidine acetate ligase (Streptococcus thermophilus (strain ATCC BAA-250 / LMG 18311)).